Here is a 284-residue protein sequence, read N- to C-terminus: Bifunctional protein FolD (284 aa).

NADP(+)-binding positions include 166–168 and Ile232; that span reads GAS.

The protein belongs to the tetrahydrofolate dehydrogenase/cyclohydrolase family. As to quaternary structure, homodimer.

The catalysed reaction is (6R)-5,10-methylene-5,6,7,8-tetrahydrofolate + NADP(+) = (6R)-5,10-methenyltetrahydrofolate + NADPH. It carries out the reaction (6R)-5,10-methenyltetrahydrofolate + H2O = (6R)-10-formyltetrahydrofolate + H(+). Its pathway is one-carbon metabolism; tetrahydrofolate interconversion. In terms of biological role, catalyzes the oxidation of 5,10-methylenetetrahydrofolate to 5,10-methenyltetrahydrofolate and then the hydrolysis of 5,10-methenyltetrahydrofolate to 10-formyltetrahydrofolate. The protein is Bifunctional protein FolD of Pseudomonas entomophila (strain L48).